The primary structure comprises 1263 residues: DNA topoisomerase 2 (1263 aa).

ATP contacts are provided by residues Asn-80, Asn-109, 137 to 139, and 150 to 157; these read STN and GKNGFGAK. The interaction with DNA stretch occupies residues 329–331; sequence VKK. 362–364 contacts ATP; it reads QTK. The region spanning 439 to 553 is the Toprim domain; it reads CTLILTEGDS…SLVKYEGFIQ (115 aa). Mg(2+) contacts are provided by Glu-445, Asp-522, and Asp-524. One can recognise a Topo IIA-type catalytic domain in the interval 737 to 1223; that stretch reads VPNLMDGFKP…SPEEIWEEEL (487 aa). The active-site O-(5'-phospho-DNA)-tyrosine intermediate is Tyr-828. A disordered region spans residues 977-1015; sequence KKASKAVSSAKNTKTTTKAGSKTGSRTRKNPALAKKSQK. The segment covering 981-1000 has biased composition (low complexity); sequence KAVSSAKNTKTTTKAGSKTG. Residues 1068–1077 are interaction with DNA; that stretch reads KLVKPLNLTN. Residues 1244–1263 form a disordered region; it reads LLNKKKGSTGKKSRKTSTQK. Over residues 1247–1263 the composition is skewed to basic residues; it reads KKKGSTGKKSRKTSTQK.

It belongs to the type II topoisomerase family. Mg(2+) is required as a cofactor. Mn(2+) serves as cofactor. It depends on Ca(2+) as a cofactor.

It carries out the reaction ATP-dependent breakage, passage and rejoining of double-stranded DNA.. Functionally, can introduce negative superhelical turns into double-stranded circular DNA. The polypeptide is DNA topoisomerase 2 (TOP2) (Acanthamoeba polyphaga (Amoeba)).